We begin with the raw amino-acid sequence, 1230 residues long: ATP-dependent helicase/nuclease subunit A (1230 aa).

Residues 4 to 480 (RNWTGPQEAA…IDLSHNFRSR (477 aa)) form the UvrD-like helicase ATP-binding domain. 25-32 (AGAGSGKT) is a binding site for ATP. The 283-residue stretch at 517 to 799 (AQLEGSGPPV…RIMSIHQAKG (283 aa)) folds into the UvrD-like helicase C-terminal domain. The disordered stretch occupies residues 535 to 554 (TSVGRDTAGTADDEPDRSDE). A compositionally biased stretch (acidic residues) spans 545 to 554 (ADDEPDRSDE).

It belongs to the helicase family. AddA subfamily. As to quaternary structure, heterodimer of AddA and AddB/RexB. Mg(2+) is required as a cofactor.

It catalyses the reaction Couples ATP hydrolysis with the unwinding of duplex DNA by translocating in the 3'-5' direction.. The enzyme catalyses ATP + H2O = ADP + phosphate + H(+). Functionally, the heterodimer acts as both an ATP-dependent DNA helicase and an ATP-dependent, dual-direction single-stranded exonuclease. Recognizes the chi site generating a DNA molecule suitable for the initiation of homologous recombination. The AddA nuclease domain is required for chi fragment generation; this subunit has the helicase and 3' -&gt; 5' nuclease activities. In Desulforudis audaxviator (strain MP104C), this protein is ATP-dependent helicase/nuclease subunit A.